Here is a 550-residue protein sequence, read N- to C-terminus: Chaperonin GroEL (550 aa).

Residues 29–32, Lys50, 86–90, Gly416, and Asp498 each bind ATP; these read TAGP and DGTTT.

This sequence belongs to the chaperonin (HSP60) family. In terms of assembly, forms a cylinder of 14 subunits composed of two heptameric rings stacked back-to-back. Interacts with the co-chaperonin GroES.

Its subcellular location is the cytoplasm. The catalysed reaction is ATP + H2O + a folded polypeptide = ADP + phosphate + an unfolded polypeptide.. Functionally, together with its co-chaperonin GroES, plays an essential role in assisting protein folding. The GroEL-GroES system forms a nano-cage that allows encapsulation of the non-native substrate proteins and provides a physical environment optimized to promote and accelerate protein folding. This Anaplasma phagocytophilum (strain HZ) protein is Chaperonin GroEL.